We begin with the raw amino-acid sequence, 81 residues long: Anaphase-promoting complex subunit emb-1 (81 aa).

As to quaternary structure, the APC/C is probably composed of at least 12 subunits: apc-2, apc-10, apc-11, cdc-26, emb-1, emb-27, emb-30, mat-1, mat-2, mat-3, such-1 and gfi-3. As to expression, expressed in germ cells.

It functions in the pathway protein modification; protein ubiquitination. Probable component of the anaphase promoting complex/cyclosome (APC/C), a cell cycle-regulated E3 ubiquitin ligase that controls progression through mitosis and the G1 phase of the cell cycle. The APC/C complex acts by mediating ubiquitination and subsequent degradation of target proteins. Developmental role in early embryogenesis and the metaphase to anaphase transition in meiosis and mitosis. May be required for germline proliferation. Required for male tail development and hermaphrodite vulva formation. The polypeptide is Anaphase-promoting complex subunit emb-1 (Caenorhabditis elegans).